The following is a 60-amino-acid chain: uncharacterized protein (60 aa).

Residues 14–34 (MLFLGTIGLAVVVGGLMAYGY) form a helical membrane-spanning segment. A disordered region spans residues 38 to 60 (GKTPSSGTSFHTASPSFSSRYRY). Polar residues predominate over residues 40–60 (TPSSGTSFHTASPSFSSRYRY).

Its subcellular location is the host membrane. This is an uncharacterized protein from Dryophytes versicolor (chameleon treefrog).